A 746-amino-acid chain; its full sequence is Stromal interaction molecule 2 (746 aa).

Residues 1 to 14 form the signal peptide; it reads MLLFGLLVAGVADG. At 15 to 218 the chain is on the extracellular side; it reads CDLVPRHLRG…RPPHNWMKDF (204 aa). S28 carries the post-translational modification Phosphoserine. An EF-hand domain is found at 67 to 102; the sequence is FSLEALQTIHKQMDDDKDGGIEVDESDEFIREDMKY. Ca(2+) is bound by residues D80, D82, D84, and E91. Residue N135 is glycosylated (N-linked (GlcNAc...) asparagine). In terms of domain architecture, SAM spans 136-204; the sequence is WTLEDTLQWL…QLKALDVVLF (69 aa). The helical transmembrane segment at 219–235 threads the bilayer; it reads ILTISIVIGVGGCWFAY. At 236–746 the chain is on the cytoplasmic side; it reads TQNKTSKEHV…IKSLFKKKSK (511 aa). Residues 247–394 adopt a coiled-coil conformation; that stretch reads KMMKDLESLQ…EKIKKKRSTV (148 aa). Disordered stretches follow at residues 490–562 and 592–651; these read PIVP…PDIL and DTAS…RGSP. The residue at position 523 (S523) is a Phosphoserine. Residues 527–539 are compositionally biased toward low complexity; it reads QRAQLPAHAPLAA. Over residues 540–549 the composition is skewed to basic residues; sequence HPRHPHHPQH. S609 and S621 each carry phosphoserine. Over residues 625–637 the composition is skewed to basic and acidic residues; it reads ISRDELSLEDSSR. Phosphoserine is present on residues S640, S650, S661, S665, S680, and S697. The segment at 684–746 is disordered; the sequence is LSSGIPVPHP…IKSLFKKKSK (63 aa). Positions 723 to 732 are enriched in basic and acidic residues; that stretch reads DLCHNGEKSK. A compositionally biased stretch (basic residues) spans 733–746; the sequence is KPSKIKSLFKKKSK.

In terms of assembly, oligomer with STIM1. Interacts with ORAI1. In terms of processing, glycosylated. Post-translationally, phosphorylated predominantly on Ser residues.

The protein localises to the endoplasmic reticulum membrane. In terms of biological role, plays a role in mediating store-operated Ca(2+) entry (SOCE), a Ca(2+) influx following depletion of intracellular Ca(2+) stores. Functions as a highly sensitive Ca(2+) sensor in the endoplasmic reticulum which activates both store-operated and store-independent Ca(2+)-influx. Regulates basal cytosolic and endoplasmic reticulum Ca(2+) concentrations. Upon mild variations of the endoplasmic reticulum Ca(2+) concentration, translocates from the endoplasmic reticulum to the plasma membrane where it probably activates the Ca(2+) release-activated Ca(2+) (CRAC) channels ORAI1, ORAI2 and ORAI3. May inhibit STIM1-mediated Ca(2+) influx. The sequence is that of Stromal interaction molecule 2 (Stim2) from Mus musculus (Mouse).